A 257-amino-acid polypeptide reads, in one-letter code: Spermidine/putrescine transport system permease protein PotC (257 aa).

Topologically, residues 1–7 (MSRFFLR) are cytoplasmic. Residues 8–27 (NAFMFVVYAYLYIPIIILVT) form a helical membrane-spanning segment. Topologically, residues 28–65 (NSFNKDRYGLSWKGFSWNWYERLFNNDTLIQAAIHSVT) are periplasmic. Residues 60 to 248 (AIHSVTIAFF…VLSLALVVLS (189 aa)) enclose the ABC transmembrane type-1 domain. The helical transmembrane segment at 66–85 (IAFFAATLATIVGGLTAIAL) threads the bilayer. Residues 86–100 (YRYRFRGKQAVSGML) lie on the Cytoplasmic side of the membrane. The helical transmembrane segment at 101-120 (FIVMMSPDIVMAVSLLALFM) threads the bilayer. Residues 121–128 (VVGISLGF) lie on the Periplasmic side of the membrane. The chain crosses the membrane as a helical span at residues 129-148 (WSLLLAHVTFCLPYVTVTIF). The Cytoplasmic portion of the chain corresponds to 149–176 (SRLNGFDSRMLEAAKDLGASEVTILRKI). Residues 177 to 196 (ILPLALPAVVSGWLLSFTIS) traverse the membrane as a helical segment. The Periplasmic portion of the chain corresponds to 197–231 (LDDVVVSSFVSGVSYEILPLRIFSLVKTGVTPEVN). A helical transmembrane segment spans residues 232 to 251 (ALATIMIVLSLALVVLSQLI). Topologically, residues 252–257 (TRKNNH) are cytoplasmic.

It belongs to the binding-protein-dependent transport system permease family. CysTW subfamily.

Its subcellular location is the cell inner membrane. Required for the activity of the bacterial periplasmic transport system of putrescine and spermidine. This Haemophilus influenzae (strain ATCC 51907 / DSM 11121 / KW20 / Rd) protein is Spermidine/putrescine transport system permease protein PotC (potC).